The chain runs to 585 residues: DNA mismatch repair protein MutL (585 aa).

Belongs to the DNA mismatch repair MutL/HexB family.

Functionally, this protein is involved in the repair of mismatches in DNA. It is required for dam-dependent methyl-directed DNA mismatch repair. May act as a 'molecular matchmaker', a protein that promotes the formation of a stable complex between two or more DNA-binding proteins in an ATP-dependent manner without itself being part of a final effector complex. The chain is DNA mismatch repair protein MutL from Methanoculleus marisnigri (strain ATCC 35101 / DSM 1498 / JR1).